Consider the following 497-residue polypeptide: ATP synthase subunit alpha 2 (497 aa).

Position 167–174 (167–174 (GERATGKT)) interacts with ATP.

Belongs to the ATPase alpha/beta chains family. F-type ATPases have 2 components, CF(1) - the catalytic core - and CF(0) - the membrane proton channel. CF(1) has five subunits: alpha(3), beta(3), gamma(1), delta(1), epsilon(1). CF(0) has four main subunits: a(1), b(1), b'(1) and c(9-12).

It localises to the cell inner membrane. The enzyme catalyses ATP + H2O + 4 H(+)(in) = ADP + phosphate + 5 H(+)(out). Functionally, produces ATP from ADP in the presence of a proton gradient across the membrane. The alpha chain is a regulatory subunit. This Cereibacter sphaeroides (strain ATCC 17029 / ATH 2.4.9) (Rhodobacter sphaeroides) protein is ATP synthase subunit alpha 2.